Consider the following 251-residue polypeptide: Probable transcriptional regulatory protein CT1665 (251 aa).

Belongs to the TACO1 family.

Its subcellular location is the cytoplasm. The protein is Probable transcriptional regulatory protein CT1665 of Chlorobaculum tepidum (strain ATCC 49652 / DSM 12025 / NBRC 103806 / TLS) (Chlorobium tepidum).